Consider the following 95-residue polypeptide: LSM complex subunit LSM2 (95 aa).

Residues 2–76 (LFFSFFKTLV…VRYVYLNKNM (75 aa)) enclose the Sm domain.

The protein belongs to the snRNP Sm proteins family. As to quaternary structure, component of the heptameric LSM1-LSM7 complex that forms a seven-membered ring structure with a donut shape. The LSm subunits are arranged in the order LSM1, LSM2, LSM3, LSM6, LSM5, LSM7 and LSM4. Except for LSM1, where a C-terminal helix crosses the ring structure to form additional interactions with LSM3 and LSM6, each subunit interacts only with its two neighboring subunits. The LSM1-LSM7 complex interacts with PAT1; within the complex PAT1 has direct interactions with LSM2 and LSM3. The LSM1-LSM7 complex interacts with XRN1. Component of the heptameric LSM2-LSM8 complex that forms a seven-membered ring structure with a donut shape; an RNA strand can pass through the hole in the center of the ring structure. The LSm subunits are arranged in the order LSM8, LSM2, LSM3, LSM6, LSM5, LSM7 and LSM4. Interacts with U6 snRNA SNR6 and chaperone PRP24; to promote formation of the U4/U6-U5 tri-snRNP (small nuclear ribonucleoprotein) complex, the LSM2-LSM8 complex preferentially binds U6 snRNA that has been modified to contain a non-cyclic 3' phosphate. Component of the spliceosome U4/U6-U5 tri-snRNP complex composed of the U4, U6 and U5 snRNAs and at least PRP3, PRP4, PRP6, PRP8, PRP18, PRP31, PRP38, SNU13, SNU23, SNU66, SNU114, SPP381, SMB1, SMD1, SMD2, SMD3, SMX2, SMX3, LSM2, LSM3, LSM4, LSM5, LSM6, LSM7, LSM8, BRR2 and DIB1. May be found in a complex comprising LSM2-LSM7 without LSM1 or LSM8; the complex associates with pre-P RNA and snoRNA SNR5.

Its subcellular location is the nucleus. It localises to the nucleolus. It is found in the cytoplasm. Its function is as follows. Component of LSm protein complexes, which are involved in RNA processing and may function in a chaperone-like manner. Component of the cytoplasmic LSM1-LSM7 complex which is involved in mRNA degradation by activating the decapping step. Together with PAT1, the LSM1-LSM7 complex binds to osmotic stress-activated mRNAs to attenuate the osmotic stress response, probably by limiting ribosome access to the mRNA and consequently translation. Component of the nuclear LSM2-LSM8 complex, which is involved in spliceosome assembly. The LSM2-LSM8 complex plays a role in the biogenesis of the spliceosomal U4/U6-U5 tri-snRNP complex by accelerating PRP24-mediated annealing of U4/U6 di-snRNA. The LSM2-LSM8 complex binds U6 snRNA terminating with a non-cyclic 3' phosphate group. LSM2-LSM8 is probably also involved in degradation of nuclear pre-mRNA by targeting them for decapping. LSM2-LSM8 could be involved in processing of pre-tRNAs, pre-rRNAs and U3 snoRNA, although involvement may be indirect. In a complex that probably contains LSM2-LSM7, but not LSM1 or LSM8, associates with the precursor of the RNA component of RNase P (pre-P RNA) and may be involved in maturing pre-P RNA; the complex also associates with snoRNA SNR5. This chain is LSM complex subunit LSM2 (LSM2), found in Saccharomyces cerevisiae (strain ATCC 204508 / S288c) (Baker's yeast).